The following is a 415-amino-acid chain: Corticotropin-releasing factor receptor 1 (415 aa).

The first 24 residues, 1 to 24 (MLLAKTPCLLLVQVIAAGISFALT), serve as a signal peptide directing secretion. The Extracellular segment spans residues 25 to 111 (SLQDQCETLQ…CQEILKQEKK (87 aa)). 3 disulfide bridges follow: Cys30–Cys54, Cys44–Cys87, and Cys68–Cys102. N-linked (GlcNAc...) asparagine glycosylation is found at Asn38, Asn45, Asn78, and Asn90. The chain crosses the membrane as a helical span at residues 112-142 (TKVHYHIAIVINFLGHSISLCALLVAFILFL). Residues 143–149 (RLRSIRC) lie on the Cytoplasmic side of the membrane. Residues 150-174 (LRNIIHWNLITAFILRNVTWFVMQL) traverse the membrane as a helical segment. The Extracellular segment spans residues 175–189 (TLSHEAHDSNVVWCR). A disulfide bond links Cys188 and Cys258. A helical membrane pass occupies residues 190-218 (LVTIAHNYFYVTNFFWMFGEGCYLHTAIV). Over 219–225 (LTYSTDK) the chain is Cytoplasmic. The helical transmembrane segment at 226 to 253 (LRKWMFICIGWCIPFPIIVAWAIGKLYY) threads the bilayer. At 254–269 (DNEKCWFGKKAGVYTD) the chain is on the extracellular side. A helical membrane pass occupies residues 270-295 (FIYQGPVILVLLINFIFLFNIVRILM). Over 296 to 306 (TKLRASTTSET) the chain is Cytoplasmic. The chain crosses the membrane as a helical span at residues 307-331 (IQYRKAVKATLVLLPLLGITYMLFF). The Extracellular segment spans residues 332-338 (VTPGEDE). The helical transmembrane segment at 339-368 (ISRIVFIYFNSFLQSFQGFFVSVFYCFLNS) threads the bilayer. Topologically, residues 369-415 (EVRSAVRKRWHRWQDKHSIRARVARAMSIPTSPTRISFHSIKQSSAI) are cytoplasmic.

Belongs to the G-protein coupled receptor 2 family. As to quaternary structure, interacts (via N-terminal extracellular domain) with CRF and UCN.

Its subcellular location is the cell membrane. In terms of biological role, G-protein coupled receptor for CRH (corticotropin-releasing factor) and UCN (urocortin). Has high affinity for CRH and UCN. Ligand binding causes a conformation change that triggers signaling via guanine nucleotide-binding proteins (G proteins) and down-stream effectors, such as adenylate cyclase. Promotes the activation of adenylate cyclase, leading to increased intracellular cAMP levels. The protein is Corticotropin-releasing factor receptor 1 (crhr1) of Xenopus laevis (African clawed frog).